Consider the following 248-residue polypeptide: 1-(5-phosphoribosyl)-5-[(5-phosphoribosylamino)methylideneamino] imidazole-4-carboxamide isomerase (248 aa).

Residue aspartate 8 is the Proton acceptor of the active site. The active-site Proton donor is the aspartate 129.

The protein belongs to the HisA/HisF family.

The protein localises to the cytoplasm. The enzyme catalyses 1-(5-phospho-beta-D-ribosyl)-5-[(5-phospho-beta-D-ribosylamino)methylideneamino]imidazole-4-carboxamide = 5-[(5-phospho-1-deoxy-D-ribulos-1-ylimino)methylamino]-1-(5-phospho-beta-D-ribosyl)imidazole-4-carboxamide. It participates in amino-acid biosynthesis; L-histidine biosynthesis; L-histidine from 5-phospho-alpha-D-ribose 1-diphosphate: step 4/9. This is 1-(5-phosphoribosyl)-5-[(5-phosphoribosylamino)methylideneamino] imidazole-4-carboxamide isomerase from Desulfitobacterium hafniense (strain Y51).